A 417-amino-acid chain; its full sequence is RH-like protein (417 aa).

11 consecutive transmembrane segments (helical) span residues 12–32, 44–64, 77–97, 125–145, 172–192, 203–223, 238–258, 265–285, 287–307, 331–351, and 358–378; these read CLPL…FFFT, LVAS…GLGF, VAFN…LDGF, ISMN…MELV, IHVF…KPLP, TSPS…WPTF, VFST…VSSL, INMT…GASC, VIHS…ISFG, TFGL…ALRV, and MIGF…AMSI.

Belongs to the ammonium transporter (TC 2.A.49) family. Rh subfamily.

It localises to the membrane. May be part of an oligomeric complex which is likely to have a transport or channel function in the erythrocyte membrane. The sequence is that of RH-like protein from Macaca fascicularis (Crab-eating macaque).